Reading from the N-terminus, the 282-residue chain is Phosphoglucan phosphatase LSF2, chloroplastic (282 aa).

The transit peptide at methionine 1–serine 61 directs the protein to the chloroplast. Residues tyrosine 83, arginine 153–arginine 156, aspartate 161, and serine 177–tryptophan 180 contribute to the substrate site. The Tyrosine-protein phosphatase domain maps to asparagine 92 to tryptophan 249. Cysteine 193 (phosphocysteine intermediate) is an active-site residue. The short motif at cysteine 193–arginine 199 is the Glucan phosphatase signature motif CXAGXGR element. Substrate-binding positions include serine 194–arginine 199, glycine 230, lysine 245, glutamate 251, asparagine 259–aspartate 263, and glutamate 268.

As to expression, widely expressed.

It localises to the plastid. The protein localises to the chloroplast. In terms of biological role, starch-associated phosphoglucan phosphatase that selectively dephosphorylates the glucan C3 position. Probably participates in the regulation of starch degradation. The chain is Phosphoglucan phosphatase LSF2, chloroplastic (LSF2) from Arabidopsis thaliana (Mouse-ear cress).